Reading from the N-terminus, the 2197-residue chain is Non-reducing polyketide synthase Preu6 (2197 aa).

The N-terminal acylcarrier protein transacylase domain (SAT) stretch occupies residues Phe-14 to Lys-253. A Ketosynthase family 3 (KS3) domain is found at Asp-375–Glu-797. Active-site for beta-ketoacyl synthase activity residues include Cys-546, His-681, and His-720. Positions Leu-901–Ser-1198 are malonyl-CoA:ACP transacylase (MAT) domain. Residue Ser-988 is the For acyl/malonyl transferase activity of the active site. The disordered stretch occupies residues Ala-1258–Pro-1282. The span at Glu-1260–Ser-1281 shows a compositional bias: polar residues. An N-terminal hotdog fold region spans residues Thr-1276 to Val-1403. In terms of domain architecture, PKS/mFAS DH spans Thr-1276–Ala-1576. The tract at residues Lys-1284–Leu-1575 is product template (PT) domain. The active-site Proton acceptor; for dehydratase activity is His-1310. The tract at residues Ala-1424–Ala-1576 is C-terminal hotdog fold. The active-site Proton donor; for dehydratase activity is Asp-1487. A compositionally biased stretch (polar residues) spans Ser-1581–Arg-1591. The segment at Ser-1581–Leu-1614 is disordered. Carrier domains follow at residues Asn-1639–Met-1719 and Asn-1748–Pro-1824. Ser-1673 and Ser-1782 each carry O-(pantetheine 4'-phosphoryl)serine. The segment at Leu-1817–Thr-1841 is disordered. Residues Gly-1818 to Gly-1833 show a composition bias toward low complexity. A thioesterase (TE) domain region spans residues Asp-1870–Ala-2197. Active-site for thioesterase activity residues include Ser-1990 and Asp-2137.

The cofactor is pantetheine 4'-phosphate.

It carries out the reaction 6 malonyl-CoA + 2 acetyl-CoA + 5 H(+) = o-orsellinate depside + 6 CO2 + 8 CoA + H2O. Its function is as follows. Non-reducing polyketide synthase; part of a gene cluster that mediates the biosynthesis of a yet unidentified natural product. The first step in the pathway is performed by Preu6 that condenses 2 acetyl-CoA starter units with 6 malonyl-CoA units to produce lecanoric acid (LA), also known as orsellinate depside, an intermediate that has significant antifungal activity against the plant pathogen Botryosphaeria berengeriana. The biosynthesis probably occurs via the formation of 2 orsellinate intermediates fused together by the C-terminal thioesterase (TE) domain that finally releases lecanoric acid. This is Non-reducing polyketide synthase Preu6 from Preussia isomera (Coprophilous fungus).